Consider the following 134-residue polypeptide: Cytochrome b5 (134 aa).

The residue at position 2 (Ala-2) is an N-acetylalanine. Lys-7, Lys-10, and Lys-19 each carry N6-acetyllysine. The Cytochrome b5 heme-binding domain maps to 9–85 (VKYYTLEEIK…SKTFIIGELH (77 aa)). The heme site is built by His-44 and His-68. Residues 109-131 (WWTNWVIPAISALIVALMYRLYM) form a helical membrane-spanning segment.

This sequence belongs to the cytochrome b5 family.

It localises to the endoplasmic reticulum membrane. The protein localises to the microsome membrane. In terms of biological role, cytochrome b5 is a membrane-bound hemoprotein functioning as an electron carrier for several membrane-bound oxygenases. The protein is Cytochrome b5 (CYB5A) of Oryctolagus cuniculus (Rabbit).